The sequence spans 238 residues: Large ribosomal subunit protein uL2 (238 aa).

Disordered regions lie at residues 1–34 and 197–238; these read MGKR…PPLS and VDHP…RRKR. Residues 224 to 238 are compositionally biased toward basic residues; it reads KVGHIAARRTGRRKR.

The protein belongs to the universal ribosomal protein uL2 family. Part of the 50S ribosomal subunit. Forms a bridge to the 30S subunit in the 70S ribosome.

Its function is as follows. One of the primary rRNA binding proteins. Required for association of the 30S and 50S subunits to form the 70S ribosome, for tRNA binding and peptide bond formation. It has been suggested to have peptidyltransferase activity; this is somewhat controversial. Makes several contacts with the 16S rRNA in the 70S ribosome. The protein is Large ribosomal subunit protein uL2 of Aeropyrum pernix (strain ATCC 700893 / DSM 11879 / JCM 9820 / NBRC 100138 / K1).